Reading from the N-terminus, the 354-residue chain is Uroporphyrinogen decarboxylase (354 aa).

Residues 27 to 31 (RQAGR), D77, Y154, T209, and H327 contribute to the substrate site.

Belongs to the uroporphyrinogen decarboxylase family. As to quaternary structure, homodimer.

Its subcellular location is the cytoplasm. It carries out the reaction uroporphyrinogen III + 4 H(+) = coproporphyrinogen III + 4 CO2. It functions in the pathway porphyrin-containing compound metabolism; protoporphyrin-IX biosynthesis; coproporphyrinogen-III from 5-aminolevulinate: step 4/4. In terms of biological role, catalyzes the decarboxylation of four acetate groups of uroporphyrinogen-III to yield coproporphyrinogen-III. This is Uroporphyrinogen decarboxylase from Cronobacter sakazakii (strain ATCC BAA-894) (Enterobacter sakazakii).